Reading from the N-terminus, the 338-residue chain is Lipoate-protein ligase A (338 aa).

A BPL/LPL catalytic domain is found at 29 to 216; it reads SPDQRVLFLW…AFFAYYDEQV (188 aa). Residues arginine 71, 76–79, and lysine 134 each bind ATP; that span reads GAVF. Lysine 134 provides a ligand contact to (R)-lipoate.

It belongs to the LplA family. Monomer.

It is found in the cytoplasm. It catalyses the reaction L-lysyl-[lipoyl-carrier protein] + (R)-lipoate + ATP = N(6)-[(R)-lipoyl]-L-lysyl-[lipoyl-carrier protein] + AMP + diphosphate + H(+). The protein operates within protein modification; protein lipoylation via exogenous pathway; protein N(6)-(lipoyl)lysine from lipoate: step 1/2. It participates in protein modification; protein lipoylation via exogenous pathway; protein N(6)-(lipoyl)lysine from lipoate: step 2/2. In terms of biological role, catalyzes both the ATP-dependent activation of exogenously supplied lipoate to lipoyl-AMP and the transfer of the activated lipoyl onto the lipoyl domains of lipoate-dependent enzymes. The protein is Lipoate-protein ligase A of Yersinia pseudotuberculosis serotype IB (strain PB1/+).